Consider the following 110-residue polypeptide: U1-lycotoxin-Ls1aa (110 aa).

An N-terminal signal peptide occupies residues 1-20; the sequence is MKFVLLFGVLLVTLFSYSSA. Residues 21–44 constitute a propeptide that is removed on maturation; it reads EMLDDFDQADEDELLSLIEKEEAR. Cystine bridges form between cysteine 47/cysteine 62, cysteine 54/cysteine 71, cysteine 61/cysteine 89, and cysteine 73/cysteine 87.

The protein belongs to the neurotoxin 19 (CSTX) family. 03 subfamily. In terms of tissue distribution, expressed by the venom gland.

It is found in the secreted. In Lycosa singoriensis (Wolf spider), this protein is U1-lycotoxin-Ls1aa.